The sequence spans 266 residues: Putative peptidyl-prolyl cis-trans isomerase NifM (266 aa).

The PpiC domain occupies 124–221; the sequence is PEQRLTRHLL…LGWHLLWCEA (98 aa).

The protein belongs to the PpiC/parvulin rotamase family.

The catalysed reaction is [protein]-peptidylproline (omega=180) = [protein]-peptidylproline (omega=0). Functionally, required for the activation and stabilization of the iron-component (NifH) of nitrogenase. Probable PPIase. This Klebsiella oxytoca protein is Putative peptidyl-prolyl cis-trans isomerase NifM (nifM).